A 310-amino-acid chain; its full sequence is MSKANLLHTDNNMKITLFSEVSVGISANSILFVVHLCKLLHENKPKPIDLYIAFFSITQLMLLITMGLIAVDMFMPWGRWDSTTCQSLIYLHRLLRGLTFCATCLLNVLWTITLSPRSSCLTKFKHKSPHHISGAFLFFCVLYMSFSSHLLVSIIATFNSTSDNFLYVTQSCSILPVSYSRTSILSTMMTMREAFLIGLMALSSGYVVVLLWRHKKQARHLHSTSLSSKASPEQRATSTIMLLMGFFVVLYILDTVIFQARLKFKDVSTFFCVKIIISHSYATFSPFVFICNDKYMIKFVTSMCGRIVNV.

The Extracellular portion of the chain corresponds to 1-16 (MSKANLLHTDNNMKIT). Residues 17-37 (LFSEVSVGISANSILFVVHLC) traverse the membrane as a helical segment. Residues 38-50 (KLLHENKPKPIDL) are Cytoplasmic-facing. A helical membrane pass occupies residues 51–71 (YIAFFSITQLMLLITMGLIAV). The Extracellular segment spans residues 72–93 (DMFMPWGRWDSTTCQSLIYLHR). Residues Cys-85 and Cys-172 are joined by a disulfide bond. The chain crosses the membrane as a helical span at residues 94–114 (LLRGLTFCATCLLNVLWTITL). Residues 115-134 (SPRSSCLTKFKHKSPHHISG) lie on the Cytoplasmic side of the membrane. A helical transmembrane segment spans residues 135–155 (AFLFFCVLYMSFSSHLLVSII). At 156–193 (ATFNSTSDNFLYVTQSCSILPVSYSRTSILSTMMTMRE) the chain is on the extracellular side. N-linked (GlcNAc...) asparagine glycosylation is present at Asn-159. Residues 194–214 (AFLIGLMALSSGYVVVLLWRH) form a helical membrane-spanning segment. The Cytoplasmic segment spans residues 215–237 (KKQARHLHSTSLSSKASPEQRAT). The chain crosses the membrane as a helical span at residues 238–258 (STIMLLMGFFVVLYILDTVIF). The Extracellular portion of the chain corresponds to 259 to 269 (QARLKFKDVST). The helical transmembrane segment at 270–290 (FFCVKIIISHSYATFSPFVFI) threads the bilayer. Topologically, residues 291–310 (CNDKYMIKFVTSMCGRIVNV) are cytoplasmic.

Belongs to the G-protein coupled receptor 1 family. In terms of tissue distribution, expressed in a subset of sensory neurons located in the apical layer of the vomeronasal organ.

The protein resides in the cell membrane. Functionally, putative pheromone receptor implicated in the regulation of social and reproductive behavior. This is Vomeronasal type-1 receptor 50 (Vmn1r50) from Mus musculus (Mouse).